A 309-amino-acid chain; its full sequence is Taste receptor type 2 member 46 (309 aa).

A topological domain (extracellular) is located at residue M1. Residues 2–22 (ITFLPIIFSILIVVTFVIGNF) traverse the membrane as a helical segment. Residues 23–46 (ANGFIALVNSIEWFKRQKISFADQ) lie on the Cytoplasmic side of the membrane. The chain crosses the membrane as a helical span at residues 47–67 (ILTALAVSRVGLLWVLVLNWY). Residues 68–86 (ATELNPAFNSIEVRITAYN) lie on the Extracellular side of the membrane. Residues 87–107 (VWAVINHFSNWLATSLSIFYL) form a helical membrane-spanning segment. At 108-126 (LKIANFSNLIFLHLKRRVK) the chain is on the cytoplasmic side. The chain crosses the membrane as a helical span at residues 127 to 147 (SVVLVILLGPLLFLVCHLFVI). Topologically, residues 148–178 (NMNQIIWTKEYEGNMTWKIKLRSAMYLSNTT) are extracellular. N161 and N176 each carry an N-linked (GlcNAc...) asparagine glycan. A helical transmembrane segment spans residues 179 to 199 (VTILANLVPFTLTLISFLLLI). Topologically, residues 200 to 229 (CSLCKHLKKMQLHGKGSQDPSMKVHIKALQ) are cytoplasmic. A helical membrane pass occupies residues 230–250 (TVTSFLLLCAIYFLSIIMSVW). The Extracellular segment spans residues 251 to 259 (SFESLENKP). The chain crosses the membrane as a helical span at residues 260 to 280 (VFMFCEAIAFSYPSTHPFILI). The Cytoplasmic portion of the chain corresponds to 281–309 (WGNKKLKQTFLSVLWHVRYWVKGEKPSSS).

Belongs to the G-protein coupled receptor T2R family. Expressed in subsets of taste receptor cells of the tongue and exclusively in gustducin-positive cells. Expressed on ciliated airway epithelium.

Its subcellular location is the membrane. The protein localises to the cell projection. It is found in the cilium membrane. Its function is as follows. Receptor that may play a role in the perception of bitterness and is gustducin-linked. May play a role in sensing the chemical composition of the gastrointestinal content. The activity of this receptor may stimulate alpha gustducin, mediate PLC-beta-2 activation and lead to the gating of TRPM5. In airway epithelial cells, binding of bitter compounds increases the intracellular calcium ion concentration and stimulates ciliary beat frequency. In Homo sapiens (Human), this protein is Taste receptor type 2 member 46 (TAS2R46).